The primary structure comprises 399 residues: Probable sugar efflux transporter (399 aa).

The next 12 helical transmembrane spans lie at 15 to 35 (VVTLAIAAFIFNTTEFAPVGL), 50 to 70 (VGMMLTIYAWVVALMSLPFML), 81 to 101 (LIGLFILFIASHVLSFFAWNF), 103 to 123 (VLVISRIGIAFAHAVFWSITS), 136 to 156 (AQALSLIATGTALAMVFGIPI), 168 to 188 (MTFLAIGLGALATLACLVKLL), 209 to 229 (PALVSVYILTVVVVTAHYTAY), 246 to 266 (FATVLLLILGGAGIIGSILFG), 273 to 293 (ASGLISLAIALLLACLLLLLP), 301 to 321 (LMLLSIFWGVAIMIIGLGMQV), 333 to 353 (VAMSLFSGIFNIGIGAGALVG), and 364 to 384 (SVGYVGAIPALVALVWSLMIF).

It belongs to the major facilitator superfamily. SotB (TC 2.A.1.2) family.

It is found in the cell inner membrane. In terms of biological role, involved in the efflux of sugars. The physiological role may be the reduction of the intracellular concentration of toxic sugars or sugar metabolites. The sequence is that of Probable sugar efflux transporter from Klebsiella pneumoniae subsp. pneumoniae (strain ATCC 700721 / MGH 78578).